The following is a 256-amino-acid chain: ATP-dependent dethiobiotin synthetase BioD (256 aa).

13 to 18 (EVGKTY) is an ATP binding site. Residue T17 participates in Mg(2+) binding. The active site involves K38. S42 contributes to the substrate binding site. ATP-binding positions include D56, 118–121 (EGAG), and 187–188 (NR). Residues D56 and E118 each contribute to the Mg(2+) site.

The protein belongs to the dethiobiotin synthetase family. As to quaternary structure, homodimer. Mg(2+) is required as a cofactor.

The protein resides in the cytoplasm. The enzyme catalyses (7R,8S)-7,8-diammoniononanoate + CO2 + ATP = (4R,5S)-dethiobiotin + ADP + phosphate + 3 H(+). It functions in the pathway cofactor biosynthesis; biotin biosynthesis; biotin from 7,8-diaminononanoate: step 1/2. In terms of biological role, catalyzes a mechanistically unusual reaction, the ATP-dependent insertion of CO2 between the N7 and N8 nitrogen atoms of 7,8-diaminopelargonic acid (DAPA, also called 7,8-diammoniononanoate) to form a ureido ring. The chain is ATP-dependent dethiobiotin synthetase BioD from Rhodopirellula baltica (strain DSM 10527 / NCIMB 13988 / SH1).